A 1058-amino-acid chain; its full sequence is Carbamoyl phosphate synthase large chain (1058 aa).

The segment at 1-401 is carboxyphosphate synthetic domain; the sequence is MPKRTDIKKI…SLLKACRSLE (401 aa). Residues R129, R169, G175, G176, K208, I210, E215, G241, I242, H243, Q284, and E298 each coordinate ATP. In terms of domain architecture, ATP-grasp 1 spans 133–327; that stretch reads KALMKALKQP…IAKIAAKIAI (195 aa). The Mg(2+) site is built by Q284, E298, and N300. The Mn(2+) site is built by Q284, E298, and N300. Residues 402 to 546 form an oligomerization domain region; sequence IGIYHNECKE…YSTYAFENES (145 aa). The tract at residues 547-929 is carbamoyl phosphate synthetic domain; that stretch reads QASPNKSILV…ALYKAFEASY (383 aa). Positions 671 to 861 constitute an ATP-grasp 2 domain; it reads EKALHDINIP…MAQVATKLIL (191 aa). ATP contacts are provided by R707, S746, I748, E752, G777, V778, H779, S780, Q820, and E832. Residues Q820, E832, and N834 each contribute to the Mg(2+) site. Mn(2+) is bound by residues Q820, E832, and N834. Residues 930 to 1058 form the MGS-like domain; that stretch reads MHVPDFGNII…ESRSFSIQSL (129 aa). Residues 930–1058 form an allosteric domain region; sequence MHVPDFGNII…ESRSFSIQSL (129 aa).

Belongs to the CarB family. In terms of assembly, composed of two chains; the small (or glutamine) chain promotes the hydrolysis of glutamine to ammonia, which is used by the large (or ammonia) chain to synthesize carbamoyl phosphate. Tetramer of heterodimers (alpha,beta)4. It depends on Mg(2+) as a cofactor. Mn(2+) is required as a cofactor.

It carries out the reaction hydrogencarbonate + L-glutamine + 2 ATP + H2O = carbamoyl phosphate + L-glutamate + 2 ADP + phosphate + 2 H(+). The enzyme catalyses hydrogencarbonate + NH4(+) + 2 ATP = carbamoyl phosphate + 2 ADP + phosphate + 2 H(+). It participates in amino-acid biosynthesis; L-arginine biosynthesis; carbamoyl phosphate from bicarbonate: step 1/1. It functions in the pathway pyrimidine metabolism; UMP biosynthesis via de novo pathway; (S)-dihydroorotate from bicarbonate: step 1/3. Large subunit of the glutamine-dependent carbamoyl phosphate synthetase (CPSase). CPSase catalyzes the formation of carbamoyl phosphate from the ammonia moiety of glutamine, carbonate, and phosphate donated by ATP, constituting the first step of 2 biosynthetic pathways, one leading to arginine and/or urea and the other to pyrimidine nucleotides. The large subunit (synthetase) binds the substrates ammonia (free or transferred from glutamine from the small subunit), hydrogencarbonate and ATP and carries out an ATP-coupled ligase reaction, activating hydrogencarbonate by forming carboxy phosphate which reacts with ammonia to form carbamoyl phosphate. This chain is Carbamoyl phosphate synthase large chain, found in Streptococcus uberis (strain ATCC BAA-854 / 0140J).